Here is an 828-residue protein sequence, read N- to C-terminus: Putative alpha-1,3-mannosyltransferase MNN12 (828 aa).

Residues 1-13 (MIEKLTIKRSRQK) are Cytoplasmic-facing. Residues 14 to 34 (VIAYSVIIIWLMIVNIWLLNN) form a helical membrane-spanning segment. The Lumenal segment spans residues 35-828 (YHLNSSTLTR…YYGDVWVGME (794 aa)). Asparagine 38 is a glycosylation site (N-linked (GlcNAc...) asparagine). Positions 80 to 104 (HQEEDVPNSQSTDNSLIKPTSPAKN) are disordered. The segment covering 86–103 (PNSQSTDNSLIKPTSPAK) has biased composition (polar residues). Residues asparagine 247, asparagine 437, and asparagine 591 are each glycosylated (N-linked (GlcNAc...) asparagine).

Belongs to the MNN1/MNT family.

The protein localises to the golgi apparatus membrane. Its pathway is protein modification; protein glycosylation. Its function is as follows. Responsible for addition of the terminal mannose residues to the outer chain of core N-linked polysaccharides and to O-linked mannotriose. Implicated in late Golgi modifications. This Candida albicans (strain SC5314 / ATCC MYA-2876) (Yeast) protein is Putative alpha-1,3-mannosyltransferase MNN12 (MNN12).